A 56-amino-acid chain; its full sequence is Ovomucoid (56 aa).

Residues 6–56 (VDCSEYPKPACTLEYRPLCGSDSKTYANKCNFCNAVVESNGTLTLSHFGKC) enclose the Kazal-like domain. Intrachain disulfides connect C8–C38, C16–C35, and C24–C56. Residue N45 is glycosylated (N-linked (GlcNAc...) asparagine).

The protein localises to the secreted. The chain is Ovomucoid from Oreortyx pictus (Mountain quail).